The chain runs to 104 residues: Naphthalene 1,2-dioxygenase system, ferredoxin component (104 aa).

Positions 6 to 101 constitute a Rieske domain; it reads IEAVALSDIL…VKIENLRVMI (96 aa). Residues Cys45, His47, Cys64, and His67 each contribute to the [2Fe-2S] cluster site.

It belongs to the bacterial ring-hydroxylating dioxygenase ferredoxin component family. As to quaternary structure, the naphthalene dioxygenase (NDO) multicomponent enzyme system is composed of an electron transfer component and a dioxygenase component (iron sulfur protein (ISP)). The electron transfer component is composed of a ferredoxin reductase (NdoR) and a ferredoxin (NdoA), and the dioxygenase component is formed of a heterohexamer (trimer of heterodimers) of three large alpha subunits (NdoB) and three small beta subunits (NdoC). Requires [2Fe-2S] cluster as cofactor.

It functions in the pathway aromatic compound metabolism; naphthalene degradation. In terms of biological role, component of the naphthalene dioxygenase (NDO) multicomponent enzyme system which catalyzes the incorporation of both atoms of molecular oxygen into naphthalene to form cis-(1R,2S)-dihydroxy-1,2-dihydronaphthalene. Functions as an intermediate electron transfer protein via a specific interaction with iron sulfur protein components (ISP) (NdoB and NdoC). Also able to catalyze the cis-dihydroxylation of biphenyl and phenanthrene. This is Naphthalene 1,2-dioxygenase system, ferredoxin component from Pseudomonas putida (Arthrobacter siderocapsulatus).